The primary structure comprises 502 residues: Lysine--tRNA ligase (502 aa).

Mg(2+) is bound by residues glutamate 411 and glutamate 418.

The protein belongs to the class-II aminoacyl-tRNA synthetase family. As to quaternary structure, homodimer. Requires Mg(2+) as cofactor.

It localises to the cytoplasm. The enzyme catalyses tRNA(Lys) + L-lysine + ATP = L-lysyl-tRNA(Lys) + AMP + diphosphate. This chain is Lysine--tRNA ligase, found in Clostridium tetani (strain Massachusetts / E88).